The sequence spans 307 residues: D-alanine--D-alanine ligase (307 aa).

Residues 110 to 299 form the ATP-grasp domain; that stretch reads KQLWKGAGLP…FDVLVGEILL (190 aa). Residue 136–185 participates in ATP binding; it reads PVIVKPAHEGSSIGMAKADNTEELGEALVAAEKFDQDVLVEAWVNGPEYT. Mg(2+) is bound by residues Asp253, Glu266, and Asn268.

Belongs to the D-alanine--D-alanine ligase family. Mg(2+) is required as a cofactor. Mn(2+) serves as cofactor.

The protein localises to the cytoplasm. The enzyme catalyses 2 D-alanine + ATP = D-alanyl-D-alanine + ADP + phosphate + H(+). Its pathway is cell wall biogenesis; peptidoglycan biosynthesis. Cell wall formation. This chain is D-alanine--D-alanine ligase, found in Alcanivorax borkumensis (strain ATCC 700651 / DSM 11573 / NCIMB 13689 / SK2).